A 1149-amino-acid chain; its full sequence is Protogenin A (1149 aa).

The first 23 residues, 1–23, serve as a signal peptide directing secretion; the sequence is MASFKRDLYLFLAVFLSISGVWS. At 24–932 the chain is on the extracellular side; the sequence is FSELFFIKEP…GFYHLDQRSM (909 aa). 4 consecutive Ig-like domains span residues 27 to 117, 122 to 209, 222 to 309, and 314 to 399; these read LFFI…ARLT, STFT…ATLT, PRII…ANIT, and PSLV…RLIV. 2 disulfides stabilise this stretch: Cys-48–Cys-100 and Cys-143–Cys-192. An N-linked (GlcNAc...) asparagine glycan is attached at Asn-78. A glycan (N-linked (GlcNAc...) asparagine) is linked at Asn-230. An intrachain disulfide couples Cys-243 to Cys-291. N-linked (GlcNAc...) asparagine glycans are attached at residues Asn-300 and Asn-307. A disulfide bridge connects residues Cys-335 and Cys-382. Fibronectin type-III domains lie at 408-502, 504-600, 605-704, 711-804, and 809-905; these read APRN…TLED, PLRA…TPKA, VPLA…VRDR, PPHH…TLPE, and APVG…IHTD. N-linked (GlcNAc...) asparagine glycosylation is found at Asn-460 and Asn-475. Asn-617 carries N-linked (GlcNAc...) asparagine glycosylation. Residues 646–666 form a disordered region; that stretch reads GQSEAAQAQIPPHHRQHTIGG. Residues Asn-720, Asn-741, and Asn-753 are each glycosylated (N-linked (GlcNAc...) asparagine). A helical membrane pass occupies residues 933–953; that stretch reads AGIAVGVCIALTCIIICILIL. Residues 954-1149 lie on the Cytoplasmic side of the membrane; the sequence is ACRSKTRKSC…EQEMTDLHPV (196 aa). Positions 1060 to 1149 are disordered; it reads YTETSPENPP…EQEMTDLHPV (90 aa). A compositionally biased stretch (polar residues) spans 1061-1073; sequence TETSPENPPTTLQ. A compositionally biased stretch (basic and acidic residues) spans 1084-1106; that stretch reads EGSHSSEGSHETSDSGRYSHDDT.

The protein belongs to the immunoglobulin superfamily. DCC family. Expression begins in the posterior region of the embryo and this posterior restriction persists at the 4 s stage. At early somite stages, expressed along the neural tube with lower levels in the lateral and paraxial mesoderm. Expression decreases caudally and rostrally becomes restricted to the ventral part of the brain. Widespread in the spinal cord at 30 hours post-fertilization (hpf) and is also expressed in the lens from this time. At 40 hpf, expression is restricted to the lens.

Its subcellular location is the membrane. May play a role in anteroposterior axis elongation. This Danio rerio (Zebrafish) protein is Protogenin A.